We begin with the raw amino-acid sequence, 396 residues long: Proton-coupled antiporter flippase LtaA (396 aa).

The next 12 membrane-spanning stretches (helical) occupy residues 15-34 (FILM…MYIL), 46-73 (IAVA…GFLL), 80-99 (IVLT…VIWF), 105-126 (VIIF…IMLS), 138-159 (GYVY…NLLI), 165-184 (RFAF…YYFV), 211-231 (LLLF…VPIL), 243-264 (TIEY…MLFL), 276-298 (MYGV…SMIV), 304-326 (WIIA…TFMA), 338-358 (WGVF…FGGL), and 370-390 (FYFS…YFIA).

This sequence belongs to the major facilitator superfamily. LtaA family.

Its subcellular location is the cell membrane. The protein operates within cell wall biogenesis; lipoteichoic acid biosynthesis. In terms of biological role, proton-coupled antiporter flippase that catalyzes the translocation, from the inner to the outer leaflet of the cell membrane, of the lipid-linked disaccharide (anchor-LLD) that anchors lipoteichoic acids (LTA) to the cell membrane. The chain is Proton-coupled antiporter flippase LtaA (ltaA) from Staphylococcus aureus (strain MRSA252).